The primary structure comprises 84 residues: UPF0410 protein YmgE (84 aa).

Transmembrane regions (helical) follow at residues 1 to 21 (MGIIAWIIFGLIAGIIAKLIM), 27 to 47 (GGFFLTCILGIVGAVVGGWLA), and 58 to 78 (GFNLHSFLVAVVGAILVLGVF).

The protein belongs to the UPF0410 family.

Its subcellular location is the cell inner membrane. This is UPF0410 protein YmgE (ymgE) from Escherichia coli O127:H6 (strain E2348/69 / EPEC).